The primary structure comprises 195 residues: MQRTSRLKRELSLLAAEPPPGITCWQDGDRMEDLRAQILGGANTPYEKGVFKLEVHIPERYPFEPPQIRFLTPIYHPNIDSAGRICLDVLKLPPKGAWRPSLNIATLLTSIQQLMAEPNPDDPLMADISSEFKYNKPVFFKNARQWTEKHARQKTDEEGMPGSLPEVGGSEGPSAAQKRKAGQLSSGGKRFCPDV.

A UBC core domain is found at 2–152 (QRTSRLKREL…ARQWTEKHAR (151 aa)). The active-site Glycyl thioester intermediate is cysteine 86. Lysine 91 is covalently cross-linked (Glycyl lysine isopeptide (Lys-Gly) (interchain with G-Cter in ubiquitin)). Residues 146–157 (WTEKHARQKTDE) show a composition bias toward basic and acidic residues. A disordered region spans residues 146 to 195 (WTEKHARQKTDEEGMPGSLPEVGGSEGPSAAQKRKAGQLSSGGKRFCPDV). A Glycyl lysine isopeptide (Lys-Gly) (interchain with G-Cter in ubiquitin) cross-link involves residue lysine 180. Lysine 189 is covalently cross-linked (Glycyl lysine isopeptide (Lys-Gly) (interchain with G-Cter in SUMO2)).

It belongs to the ubiquitin-conjugating enzyme family. As to quaternary structure, interacts with FANCL and BRCA1. In terms of processing, auto-ubiquitinated. Effects of auto-monoubiquitination at Lys-91 and Lys-180 are unclear.

The protein resides in the nucleus. It catalyses the reaction S-ubiquitinyl-[E1 ubiquitin-activating enzyme]-L-cysteine + [E2 ubiquitin-conjugating enzyme]-L-cysteine = [E1 ubiquitin-activating enzyme]-L-cysteine + S-ubiquitinyl-[E2 ubiquitin-conjugating enzyme]-L-cysteine.. It functions in the pathway protein modification; protein ubiquitination. In terms of biological role, accepts ubiquitin from the E1 complex and catalyzes its covalent attachment to other proteins. Catalyzes monoubiquitination. Involved in mitomycin-C (MMC)-induced DNA repair: acts as a specific E2 ubiquitin-conjugating enzyme for the Fanconi anemia complex by associating with E3 ubiquitin-protein ligase FANCL and catalyzing monoubiquitination of FANCD2, a key step in the DNA damage pathway. Also mediates monoubiquitination of FANCL and FANCI. May contribute to ubiquitination and degradation of BRCA1. In vitro able to promote polyubiquitination using all 7 ubiquitin Lys residues, but may prefer 'Lys-11'-, 'Lys-27'-, 'Lys-48'- and 'Lys-63'-linked polyubiquitination. The polypeptide is Ubiquitin-conjugating enzyme E2 T (UBE2T) (Bos taurus (Bovine)).